The primary structure comprises 284 residues: Pantothenate synthetase (284 aa).

32–39 (MGALHEGH) serves as a coordination point for ATP. Histidine 39 acts as the Proton donor in catalysis. Glutamine 63 is a (R)-pantoate binding site. A beta-alanine-binding site is contributed by glutamine 63. 149-152 (GEKD) is a binding site for ATP. Residue glutamine 155 participates in (R)-pantoate binding. Residues valine 178 and 186–189 (LSSR) contribute to the ATP site.

It belongs to the pantothenate synthetase family. In terms of assembly, homodimer.

It is found in the cytoplasm. The enzyme catalyses (R)-pantoate + beta-alanine + ATP = (R)-pantothenate + AMP + diphosphate + H(+). It functions in the pathway cofactor biosynthesis; (R)-pantothenate biosynthesis; (R)-pantothenate from (R)-pantoate and beta-alanine: step 1/1. Functionally, catalyzes the condensation of pantoate with beta-alanine in an ATP-dependent reaction via a pantoyl-adenylate intermediate. The polypeptide is Pantothenate synthetase (Chelativorans sp. (strain BNC1)).